The following is a 409-amino-acid chain: Translation initiation factor 2 subunit gamma (409 aa).

Residues 7 to 203 (QPEVNIGLVG…TIESEIPTPD (197 aa)) enclose the tr-type G domain. The interval 16–23 (GHVDHGKT) is G1. Residues aspartate 19, threonine 23, glycine 44, and serine 46 each contribute to the Mg(2+) site. 19-24 (DHGKTT) contacts GTP. Residues 44-48 (GISIR) form a G2 region. Positions 90-93 (DAPG) are G3. GTP contacts are provided by residues 146–149 (NKID) and 181–183 (SAQ). A G4 region spans residues 146-149 (NKID). The segment at 181-183 (SAQ) is G5.

Belongs to the TRAFAC class translation factor GTPase superfamily. Classic translation factor GTPase family. EIF2G subfamily. As to quaternary structure, heterotrimer composed of an alpha, a beta and a gamma chain. Mg(2+) serves as cofactor.

The catalysed reaction is GTP + H2O = GDP + phosphate + H(+). EIF-2 functions in the early steps of protein synthesis by forming a ternary complex with GTP and initiator tRNA. The polypeptide is Translation initiation factor 2 subunit gamma (Natronomonas pharaonis (strain ATCC 35678 / DSM 2160 / CIP 103997 / JCM 8858 / NBRC 14720 / NCIMB 2260 / Gabara) (Halobacterium pharaonis)).